We begin with the raw amino-acid sequence, 246 residues long: MCAVPVIIPAIDLKDGKCVRLKQGRMEDDTVFSDDPVAMAARWVKEGARRLHLVDLNGAFDGIPVHKQVVHDIAKAFPKLPIQLGGGVRNMQTIEQYITAGLTYIIIGTKAVEDPDFVAEACREFAGHIIVGIDAKDGMVATHGWANVTDTKATELAKRFADVGVSSIVYTDIARDGMMQGVNVEQTVNLAREGGLPVIASGGVTDMKDIELLKPYGDCIEGIITGRAIYEGTLDLGEAQLYLDGK.

Residue aspartate 12 is the Proton acceptor of the active site. Catalysis depends on aspartate 134, which acts as the Proton donor.

It belongs to the HisA/HisF family.

The protein localises to the cytoplasm. The enzyme catalyses 1-(5-phospho-beta-D-ribosyl)-5-[(5-phospho-beta-D-ribosylamino)methylideneamino]imidazole-4-carboxamide = 5-[(5-phospho-1-deoxy-D-ribulos-1-ylimino)methylamino]-1-(5-phospho-beta-D-ribosyl)imidazole-4-carboxamide. Its pathway is amino-acid biosynthesis; L-histidine biosynthesis; L-histidine from 5-phospho-alpha-D-ribose 1-diphosphate: step 4/9. This Psychrobacter cryohalolentis (strain ATCC BAA-1226 / DSM 17306 / VKM B-2378 / K5) protein is 1-(5-phosphoribosyl)-5-[(5-phosphoribosylamino)methylideneamino] imidazole-4-carboxamide isomerase.